Here is a 544-residue protein sequence, read N- to C-terminus: Probable protein kinase UbiB (544 aa).

Residues 123-501 (DFDIKPLASA…KRQQAKGQFL (379 aa)) enclose the Protein kinase domain. Residues 129-137 (LASASIAQV) and K152 each bind ATP. The Proton acceptor role is filled by D287. The helical transmembrane segment at 515–537 (LLTSNITVLASISAATGAAFWLF) threads the bilayer.

It belongs to the ABC1 family. UbiB subfamily.

The protein resides in the cell inner membrane. It functions in the pathway cofactor biosynthesis; ubiquinone biosynthesis [regulation]. Functionally, is probably a protein kinase regulator of UbiI activity which is involved in aerobic coenzyme Q (ubiquinone) biosynthesis. This is Probable protein kinase UbiB from Aliivibrio fischeri (strain MJ11) (Vibrio fischeri).